The following is a 135-amino-acid chain: Ribonuclease P protein component (135 aa).

Belongs to the RnpA family. As to quaternary structure, consists of a catalytic RNA component (M1 or rnpB) and a protein subunit.

It carries out the reaction Endonucleolytic cleavage of RNA, removing 5'-extranucleotides from tRNA precursor.. RNaseP catalyzes the removal of the 5'-leader sequence from pre-tRNA to produce the mature 5'-terminus. It can also cleave other RNA substrates such as 4.5S RNA. The protein component plays an auxiliary but essential role in vivo by binding to the 5'-leader sequence and broadening the substrate specificity of the ribozyme. This Saccharophagus degradans (strain 2-40 / ATCC 43961 / DSM 17024) protein is Ribonuclease P protein component.